The primary structure comprises 369 residues: Peptide chain release factor 2 (369 aa).

At glutamine 250 the chain carries N5-methylglutamine.

The protein belongs to the prokaryotic/mitochondrial release factor family. In terms of processing, methylated by PrmC. Methylation increases the termination efficiency of RF2.

It localises to the cytoplasm. Its function is as follows. Peptide chain release factor 2 directs the termination of translation in response to the peptide chain termination codons UGA and UAA. This is Peptide chain release factor 2 (prfB) from Rickettsia prowazekii (strain Madrid E).